The primary structure comprises 191 residues: ECF RNA polymerase sigma factor ShbA (191 aa).

Residues 27–98 (LLAHVHPLAL…HKVADLQRAA (72 aa)) are sigma-70 factor domain-2. The segment at 100-122 (RHPGSTAVPSDEMPERPDDSLGP) is disordered. Positions 112 to 122 (MPERPDDSLGP) are enriched in basic and acidic residues. A sigma-70 factor domain-4 region spans residues 138-187 (LLANLPENQRELLVLRVAVGLTAEETGQMLGMSPGAVRVAQHRALSRLRA). A DNA-binding region (H-T-H motif) is located at residues 160–179 (AEETGQMLGMSPGAVRVAQH).

This sequence belongs to the sigma-70 factor family. ECF subfamily.

In terms of biological role, sigma factors are initiation factors that promote the attachment of RNA polymerase to specific initiation sites and are then released. Extracytoplasmic function (ECF) sigma factors are held in an inactive form by an anti-sigma factor until released. This alternative sigma factor governs the transcription of the principal sigma factor HrdB (SigA) throughout growth. Acts by binding to the promoter region. The sequence is that of ECF RNA polymerase sigma factor ShbA from Streptomyces griseus subsp. griseus (strain JCM 4626 / CBS 651.72 / NBRC 13350 / KCC S-0626 / ISP 5235).